Consider the following 468-residue polypeptide: Adenosylhomocysteinase (468 aa).

Substrate contacts are provided by T57, D132, and E194. Residue 195–197 participates in NAD(+) binding; that stretch reads TTT. Substrate-binding residues include K224 and D228. Residues N229, 258–263, E281, N316, 337–339, and N382 each bind NAD(+); these read GFGDVG and IGH.

It belongs to the adenosylhomocysteinase family. NAD(+) is required as a cofactor.

The protein resides in the cytoplasm. The enzyme catalyses S-adenosyl-L-homocysteine + H2O = L-homocysteine + adenosine. It functions in the pathway amino-acid biosynthesis; L-homocysteine biosynthesis; L-homocysteine from S-adenosyl-L-homocysteine: step 1/1. May play a key role in the regulation of the intracellular concentration of adenosylhomocysteine. The polypeptide is Adenosylhomocysteinase (Methylorubrum populi (strain ATCC BAA-705 / NCIMB 13946 / BJ001) (Methylobacterium populi)).